Reading from the N-terminus, the 741-residue chain is Cysteine--tRNA ligase, cytoplasmic (741 aa).

C46 is a binding site for Zn(2+). Residues P48–H58 carry the 'HIGH' region motif. Residue S297 is modified to Phosphoserine. Zn(2+)-binding residues include C340, H365, and E369. The short motif at K398–S402 is the 'KMSKS' region element. Residue K401 participates in ATP binding.

The protein belongs to the class-I aminoacyl-tRNA synthetase family. It depends on Zn(2+) as a cofactor.

It is found in the cytoplasm. The enzyme catalyses tRNA(Cys) + L-cysteine + ATP = L-cysteinyl-tRNA(Cys) + AMP + diphosphate. This is Cysteine--tRNA ligase, cytoplasmic (Aats-cys) from Drosophila pseudoobscura pseudoobscura (Fruit fly).